Here is a 263-residue protein sequence, read N- to C-terminus: Acyl-[acyl-carrier-protein]--UDP-N-acetylglucosamine O-acyltransferase (263 aa).

It belongs to the transferase hexapeptide repeat family. LpxA subfamily. In terms of assembly, homotrimer.

It localises to the cytoplasm. The enzyme catalyses a (3R)-hydroxyacyl-[ACP] + UDP-N-acetyl-alpha-D-glucosamine = a UDP-3-O-[(3R)-3-hydroxyacyl]-N-acetyl-alpha-D-glucosamine + holo-[ACP]. It participates in glycolipid biosynthesis; lipid IV(A) biosynthesis; lipid IV(A) from (3R)-3-hydroxytetradecanoyl-[acyl-carrier-protein] and UDP-N-acetyl-alpha-D-glucosamine: step 1/6. Involved in the biosynthesis of lipid A, a phosphorylated glycolipid that anchors the lipopolysaccharide to the outer membrane of the cell. In Xylella fastidiosa (strain Temecula1 / ATCC 700964), this protein is Acyl-[acyl-carrier-protein]--UDP-N-acetylglucosamine O-acyltransferase.